The following is a 183-amino-acid chain: Ribosome rescue factor SmrB (183 aa).

One can recognise a Smr domain in the interval 98–173; sequence LDLHGLTQLQ…GDAALLVLIE (76 aa).

The protein belongs to the SmrB family. Associates with collided ribosomes, but not with correctly translating polysomes.

Its function is as follows. Acts as a ribosome collision sensor. Detects stalled/collided disomes (pairs of ribosomes where the leading ribosome is stalled and a second ribosome has collided with it) and endonucleolytically cleaves mRNA at the 5' boundary of the stalled ribosome. Stalled/collided disomes form a new interface (primarily via the 30S subunits) that binds SmrB. Cleaved mRNA becomes available for tmRNA ligation, leading to ribosomal subunit dissociation and rescue of stalled ribosomes. The protein is Ribosome rescue factor SmrB of Shigella sonnei (strain Ss046).